The chain runs to 254 residues: tRNA 2'-phosphotransferase 1 (254 aa).

Met-1 bears the N-acetylmethionine mark. 2 disordered regions span residues 1-30 (MNSFGGRRRETAGPKGRRAHRPPQDQDRDV) and 225-254 (RKPLSLAGNEEKEHQRDSKHSSRGRGMTQQ). Residues 233–244 (NEEKEHQRDSKH) show a composition bias toward basic and acidic residues.

The protein belongs to the KptA/TPT1 family.

It carries out the reaction 2'-phospho-[ligated tRNA] + NAD(+) = mature tRNA + ADP-alpha-D-ribose 1'',2''-cyclic phosphate + nicotinamide. Its function is as follows. Catalyzes the last step of tRNA splicing, the transfer of the splice junction 2'-phosphate from ligated tRNA to NAD to produce ADP-ribose 1''-2'' cyclic phosphate. This Bos taurus (Bovine) protein is tRNA 2'-phosphotransferase 1 (TRPT1).